The following is a 380-amino-acid chain: Putative S-(hydroxymethyl)glutathione dehydrogenase 2 (380 aa).

Position 50 (Cys50) interacts with Zn(2+). His51 serves as a coordination point for NAD(+). Zn(2+) contacts are provided by His72, Glu73, Cys102, Cys105, Cys108, Cys116, and Cys179. Residues Gly204–Gly209, Asp228, and Ile297–Val299 contribute to the NAD(+) site.

The protein belongs to the zinc-containing alcohol dehydrogenase family. Class-III subfamily. Requires Zn(2+) as cofactor.

It carries out the reaction a primary alcohol + NAD(+) = an aldehyde + NADH + H(+). The enzyme catalyses a secondary alcohol + NAD(+) = a ketone + NADH + H(+). It catalyses the reaction S-(hydroxymethyl)glutathione + NADP(+) = S-formylglutathione + NADPH + H(+). The catalysed reaction is S-(hydroxymethyl)glutathione + NAD(+) = S-formylglutathione + NADH + H(+). It carries out the reaction S-nitrosoglutathione + NADH + H(+) = S-(hydroxysulfenamide)glutathione + NAD(+). In terms of biological role, oxidizes long-chain alcohols and, in the presence of glutathione, is able to oxidize formaldehyde. Also acts as a S-nitroso-glutathione reductase by catalyzing the NADH-dependent reduction of S-nitrosoglutathione, thereby regulating protein S-nitrosylation. This Schizosaccharomyces pombe (strain 972 / ATCC 24843) (Fission yeast) protein is Putative S-(hydroxymethyl)glutathione dehydrogenase 2.